We begin with the raw amino-acid sequence, 638 residues long: Outer dense fiber protein 2 (638 aa).

Position 73 is a phosphothreonine (threonine 73). At serine 76 the chain carries Phosphoserine; by TSSK4. Residues serine 87 and serine 90 each carry the phosphoserine modification. A Phosphothreonine modification is found at threonine 91. Phosphoserine is present on residues serine 96 and serine 110. A Glycyl lysine isopeptide (Lys-Gly) (interchain with G-Cter in SUMO2) cross-link involves residue lysine 119. Serine 120 carries the phosphoserine modification. The stretch at glutamine 125 to aspartate 198 forms a coiled coil. A Phosphothreonine modification is found at threonine 212. Coiled-coil stretches lie at residues aspartate 226 to leucine 404 and glutamate 442 to arginine 616. Position 242 is a phosphoserine (serine 242). The segment at lysine 373–lysine 396 is disordered. Position 613 is a phosphoserine (serine 613).

This sequence belongs to the ODF2 family. Self-associates. Associates with microtubules and forms a fibrillar structure partially linked to the microtubule network. Interacts via its C-terminus with PLK1. Interacts with ODF1. Localized at the distal/subdistal appendages of mother centrioles. Interacts with MARK4; the interaction is required for localization of ODF2 to centrioles. Interacts with TSSK4. Interacts with AKNA. Interacts with QRICH2. Interacts with CFAP58. Interacts with BBOF1. Interacts with CCDC38. Interacts with CCDC42. Post-translationally, tyrosine phosphorylated. Phosphorylated on Ser-76 by TSSK4.

The protein localises to the cytoplasm. The protein resides in the cytoskeleton. It is found in the microtubule organizing center. Its subcellular location is the centrosome. It localises to the cell projection. The protein localises to the cilium. The protein resides in the centriole. It is found in the spindle pole. Its subcellular location is the flagellum. Seems to be a major component of sperm tail outer dense fibers (ODF). ODFs are filamentous structures located on the outside of the axoneme in the midpiece and principal piece of the mammalian sperm tail and may help to maintain the passive elastic structures and elastic recoil of the sperm tail. May have a modulating influence on sperm motility. Functions as a general scaffold protein that is specifically localized at the distal/subdistal appendages of mother centrioles. Component of the centrosome matrix required for the localization of PLK1 and NIN to the centrosomes. Required for the formation and/or maintenance of normal CETN1 assembly. This is Outer dense fiber protein 2 (ODF2) from Macaca fascicularis (Crab-eating macaque).